The following is a 297-amino-acid chain: Phosphoribosylaminoimidazole-succinocarboxamide synthase (297 aa).

Belongs to the SAICAR synthetase family.

The catalysed reaction is 5-amino-1-(5-phospho-D-ribosyl)imidazole-4-carboxylate + L-aspartate + ATP = (2S)-2-[5-amino-1-(5-phospho-beta-D-ribosyl)imidazole-4-carboxamido]succinate + ADP + phosphate + 2 H(+). Its pathway is purine metabolism; IMP biosynthesis via de novo pathway; 5-amino-1-(5-phospho-D-ribosyl)imidazole-4-carboxamide from 5-amino-1-(5-phospho-D-ribosyl)imidazole-4-carboxylate: step 1/2. This Methylococcus capsulatus (strain ATCC 33009 / NCIMB 11132 / Bath) protein is Phosphoribosylaminoimidazole-succinocarboxamide synthase.